We begin with the raw amino-acid sequence, 36 residues long: Omega-agatoxin-Aa1b (36 aa).

This sequence belongs to the neurotoxin 04 (omega-agtx) family. 01 (type I omega-agtx) subfamily. In terms of tissue distribution, expressed by the venom gland.

It localises to the secreted. Its function is as follows. Omega-agatoxin are antagonist of voltage-gated calcium channels. They block insect neuromuscular transmission presynaptically. This toxin is a blocker of L-type calcium channels (Cav/CACNA1). This is Omega-agatoxin-Aa1b from Agelenopsis aperta (North American funnel-web spider).